Here is a 400-residue protein sequence, read N- to C-terminus: Argininosuccinate synthase (400 aa).

ATP-binding positions include 10-18 (AYSGGVDTS) and Ala38. Position 89 (Tyr89) interacts with L-citrulline. Gly119 provides a ligand contact to ATP. L-aspartate contacts are provided by Thr121, Asn125, and Asp126. Asn125 contacts L-citrulline. L-citrulline contacts are provided by Arg129, Ser177, Ser186, Glu262, and Tyr274.

Belongs to the argininosuccinate synthase family. Type 1 subfamily. Homotetramer.

It localises to the cytoplasm. The catalysed reaction is L-citrulline + L-aspartate + ATP = 2-(N(omega)-L-arginino)succinate + AMP + diphosphate + H(+). Its pathway is amino-acid biosynthesis; L-arginine biosynthesis; L-arginine from L-ornithine and carbamoyl phosphate: step 2/3. The protein is Argininosuccinate synthase of Prochlorococcus marinus (strain NATL1A).